We begin with the raw amino-acid sequence, 406 residues long: Nicotinate phosphoribosyltransferase (406 aa).

Residue His227 is modified to Phosphohistidine; by autocatalysis.

It belongs to the NAPRTase family. In terms of processing, transiently phosphorylated on a His residue during the reaction cycle. Phosphorylation strongly increases the affinity for substrates and increases the rate of nicotinate D-ribonucleotide production. Dephosphorylation regenerates the low-affinity form of the enzyme, leading to product release.

The catalysed reaction is nicotinate + 5-phospho-alpha-D-ribose 1-diphosphate + ATP + H2O = nicotinate beta-D-ribonucleotide + ADP + phosphate + diphosphate. It functions in the pathway cofactor biosynthesis; NAD(+) biosynthesis; nicotinate D-ribonucleotide from nicotinate: step 1/1. Catalyzes the synthesis of beta-nicotinate D-ribonucleotide from nicotinate and 5-phospho-D-ribose 1-phosphate at the expense of ATP. The protein is Nicotinate phosphoribosyltransferase of Methanosarcina mazei (strain ATCC BAA-159 / DSM 3647 / Goe1 / Go1 / JCM 11833 / OCM 88) (Methanosarcina frisia).